A 144-amino-acid polypeptide reads, in one-letter code: HTH-type transcriptional regulator BilQ (144 aa).

The region spanning 1–134 is the HTH marR-type domain; that stretch reads MEQTFAYYTT…LFTLLQKLGK (134 aa). The H-T-H motif DNA-binding region spans 48 to 71; sequence QRELAAAVRADEGYAARSVEKLLQ.

Functionally, transcription regulator that regulates expression of the bilirubin reductase operon (bilQ, bilR and bilS). The protein is HTH-type transcriptional regulator BilQ of Clostridium symbiosum (strain WAL-14163).